A 451-amino-acid chain; its full sequence is MNVSHRRYHIITFGCQMNKADSERMAGILENLGMTYTDDPNQADLVLYNTCSIRDNAEQKVYSYLGRQAKRKQVEPELTLVVAGCVAQQEGEQLLRRVPELDLVMGPQHANRLDQLLEQVWAGSQVVATESLHIMEDITKPRRESTVSAWVNIIYGCNERCSYCVVPNVRGVEQSRTPEAIYGEMEVLAQQGFKEVTLLGQNIDAYGRDLPGTTPSGRHLHTLTDLLYHVHDIEGIDRLRFATSHPRYFTERLIQACQELPKVCEHFHIPFQSGDNDILKAMKRGYTREKYLQIIEKIRRYMPDAAISADVIVGFPGETEAQFENTLNLIEEVGFDLLNTAAYSPRPGTPAAFWDNQLSEEVKGDRLQRLNHLVSTQAMERSQRYLGRVEEVLVEGENLKSPGQVMGRTRGNRLTFFQGEISELLGKTVPVKITEARAFSLTGEALSLVTA.

The MTTase N-terminal domain occupies 6–122 (RRYHIITFGC…LDQLLEQVWA (117 aa)). The [4Fe-4S] cluster site is built by Cys-15, Cys-51, Cys-85, Cys-157, Cys-161, and Cys-164. One can recognise a Radical SAM core domain in the interval 143 to 384 (RESTVSAWVN…STQAMERSQR (242 aa)). Residues 383–447 (QRYLGRVEEV…AFSLTGEALS (65 aa)) form the TRAM domain.

It belongs to the methylthiotransferase family. MiaB subfamily. As to quaternary structure, monomer. [4Fe-4S] cluster is required as a cofactor.

The protein resides in the cytoplasm. The enzyme catalyses N(6)-dimethylallyladenosine(37) in tRNA + (sulfur carrier)-SH + AH2 + 2 S-adenosyl-L-methionine = 2-methylsulfanyl-N(6)-dimethylallyladenosine(37) in tRNA + (sulfur carrier)-H + 5'-deoxyadenosine + L-methionine + A + S-adenosyl-L-homocysteine + 2 H(+). Its function is as follows. Catalyzes the methylthiolation of N6-(dimethylallyl)adenosine (i(6)A), leading to the formation of 2-methylthio-N6-(dimethylallyl)adenosine (ms(2)i(6)A) at position 37 in tRNAs that read codons beginning with uridine. The chain is tRNA-2-methylthio-N(6)-dimethylallyladenosine synthase from Synechocystis sp. (strain ATCC 27184 / PCC 6803 / Kazusa).